Consider the following 87-residue polypeptide: UPF0335 protein Avi_3695 (87 aa).

The protein belongs to the UPF0335 family.

The sequence is that of UPF0335 protein Avi_3695 from Allorhizobium ampelinum (strain ATCC BAA-846 / DSM 112012 / S4) (Agrobacterium vitis (strain S4)).